Reading from the N-terminus, the 338-residue chain is Anthranilate phosphoribosyltransferase (338 aa).

Residues Gly81, 84–85, Ser89, 91–94, 109–117, and Ala121 each bind 5-phospho-alpha-D-ribose 1-diphosphate; these read GD, NVST, and KHGNRALSS. An anthranilate-binding site is contributed by Gly81. Residue Ser93 coordinates Mg(2+). Asn112 contributes to the anthranilate binding site. An anthranilate-binding site is contributed by Arg167. 2 residues coordinate Mg(2+): Asp226 and Glu227.

Belongs to the anthranilate phosphoribosyltransferase family. As to quaternary structure, homodimer. Mg(2+) serves as cofactor.

It catalyses the reaction N-(5-phospho-beta-D-ribosyl)anthranilate + diphosphate = 5-phospho-alpha-D-ribose 1-diphosphate + anthranilate. The protein operates within amino-acid biosynthesis; L-tryptophan biosynthesis; L-tryptophan from chorismate: step 2/5. In terms of biological role, catalyzes the transfer of the phosphoribosyl group of 5-phosphorylribose-1-pyrophosphate (PRPP) to anthranilate to yield N-(5'-phosphoribosyl)-anthranilate (PRA). The protein is Anthranilate phosphoribosyltransferase of Rhodopseudomonas palustris (strain TIE-1).